The chain runs to 134 residues: MALLNIFDIAGSALTAQSQRLNVAASNLANADSVTGPDGQPYRAKQVVFQVNAAPGAATGGVKVADVIESQAPDKLVYEPGNPLADAKGYVKMPNVDVVGEMVNTMSASRSYQANVEVLNTVKSMMLKTLTLGQ.

It belongs to the flagella basal body rod proteins family. As to quaternary structure, the basal body constitutes a major portion of the flagellar organelle and consists of four rings (L,P,S, and M) mounted on a central rod. The rod consists of about 26 subunits of FlgG in the distal portion, and FlgB, FlgC and FlgF are thought to build up the proximal portion of the rod with about 6 subunits each.

It is found in the bacterial flagellum basal body. This chain is Flagellar basal-body rod protein FlgC (flgC), found in Escherichia coli O157:H7.